The following is a 619-amino-acid chain: DEAD-box ATP-dependent RNA helicase 35B (619 aa).

Low complexity-rich tracts occupy residues 1–10 (MAAAAAAAAA) and 49–58 (PPTTNAVAVA). Residues 1–72 (MAAAAAAAAA…PPRSTSSPAV (72 aa)) form a disordered region. The Q motif signature appears at 173 to 201 (RSFGDLRLPEPILRALRGKGIEKPTPIQV). Positions 204–388 (LPVALSGRDM…KSALVKPIIV (185 aa)) constitute a Helicase ATP-binding domain. 217 to 224 (AFTGSGKT) lines the ATP pocket. The DEAD box motif lies at 336 to 339 (DEAD). In terms of domain architecture, Helicase C-terminal spans 399-559 (DVIQEVEYVK…RLPPILADLD (161 aa)). The CCHC-type zinc finger occupies 576–593 (KGCAFCGGLGHRIEACPK).

The protein belongs to the DEAD box helicase family. DDX41 subfamily.

The catalysed reaction is ATP + H2O = ADP + phosphate + H(+). This Oryza sativa subsp. japonica (Rice) protein is DEAD-box ATP-dependent RNA helicase 35B.